The primary structure comprises 404 residues: 1-deoxy-D-xylulose 5-phosphate reductoisomerase (404 aa).

NADPH-binding residues include Thr10, Gly11, Ser12, Ile13, Gly36, Arg37, Asn38, and Asn124. Lys125 contacts 1-deoxy-D-xylulose 5-phosphate. NADPH is bound at residue Glu126. Asp150 provides a ligand contact to Mn(2+). Ser151, Glu152, Ser186, and His209 together coordinate 1-deoxy-D-xylulose 5-phosphate. Glu152 provides a ligand contact to Mn(2+). An NADPH-binding site is contributed by Gly215. 4 residues coordinate 1-deoxy-D-xylulose 5-phosphate: Ser222, Asn227, Lys228, and Glu231. Glu231 contacts Mn(2+).

This sequence belongs to the DXR family. In terms of assembly, homodimer. Mg(2+) serves as cofactor. Mn(2+) is required as a cofactor.

It carries out the reaction 2-C-methyl-D-erythritol 4-phosphate + NADP(+) = 1-deoxy-D-xylulose 5-phosphate + NADPH + H(+). Its pathway is isoprenoid biosynthesis; isopentenyl diphosphate biosynthesis via DXP pathway; isopentenyl diphosphate from 1-deoxy-D-xylulose 5-phosphate: step 1/6. Its function is as follows. Catalyzes the NADPH-dependent rearrangement and reduction of 1-deoxy-D-xylulose-5-phosphate (DXP) to 2-C-methyl-D-erythritol 4-phosphate (MEP). The protein is 1-deoxy-D-xylulose 5-phosphate reductoisomerase of Erwinia tasmaniensis (strain DSM 17950 / CFBP 7177 / CIP 109463 / NCPPB 4357 / Et1/99).